Reading from the N-terminus, the 1137-residue chain is Voltage-dependent calcium channel subunit alpha-2/delta-4 (1137 aa).

The first 19 residues, 1–19 (MVCGCSALLPLPNPRPTMP), serve as a signal peptide directing secretion. The Extracellular portion of the chain corresponds to 20 to 1115 (ATPNFLANPS…AQDCGGASDT (1096 aa)). The N-linked (GlcNAc...) asparagine glycan is linked to asparagine 201. The region spanning 291-473 (DIVILVDVSG…ENVMEYLHVL (183 aa)) is the VWFA domain. Residues aspartate 297, serine 299, and serine 301 each contribute to the a divalent metal cation site. The short motif at 297–301 (DVSGS) is the MIDAS-like motif element. The cysteines at positions 447 and 1097 are disulfide-linked. The Cache domain occupies 487–580 (WTEAYMDSKL…RPLYREGKKL (94 aa)). An N-linked (GlcNAc...) asparagine glycan is attached at asparagine 664. A helical membrane pass occupies residues 1116-1136 (SASPPLLLLPVCAWGLLPQLL). Arginine 1137 is a topological domain (cytoplasmic).

Belongs to the calcium channel subunit alpha-2/delta family. As to quaternary structure, dimer formed of alpha-2-2 and delta-2 chains; disulfide-linked. Voltage-dependent calcium channels are multisubunit complexes, consisting of alpha-1 (CACNA1), alpha-2 (CACNA2D), beta (CACNB) and delta (CACNA2D) subunits in a 1:1:1:1 ratio. Interacts with CACNA1C and CACNB3. May be proteolytically processed into subunits alpha-2-4 and delta-4 that are disulfide-linked. It is however unclear whether such cleavage really takes place in vivo and has a functional role. As to expression, predominantly expressed in certain types of endocrine cells. Present in the Paneth cells of the small intestine. Also present in the erythroblasts in the fetal liver, in the cells of the zona reticularis of the adrenal gland and in the basophils of the pituitary. Present at low level in some brain regions such as the cerebellum (at protein level).

The protein resides in the membrane. Functionally, the alpha-2/delta subunit of voltage-dependent calcium channels regulates calcium current density and activation/inactivation kinetics of the calcium channel. In Homo sapiens (Human), this protein is Voltage-dependent calcium channel subunit alpha-2/delta-4 (CACNA2D4).